Here is a 406-residue protein sequence, read N- to C-terminus: Succinylornithine transaminase (406 aa).

K252 is subject to N6-(pyridoxal phosphate)lysine.

It belongs to the class-III pyridoxal-phosphate-dependent aminotransferase family. AstC subfamily. Pyridoxal 5'-phosphate is required as a cofactor.

The enzyme catalyses N(2)-succinyl-L-ornithine + 2-oxoglutarate = N-succinyl-L-glutamate 5-semialdehyde + L-glutamate. It functions in the pathway amino-acid degradation; L-arginine degradation via AST pathway; L-glutamate and succinate from L-arginine: step 3/5. Its function is as follows. Catalyzes the transamination of N(2)-succinylornithine and alpha-ketoglutarate into N(2)-succinylglutamate semialdehyde and glutamate. Can also act as an acetylornithine aminotransferase. This chain is Succinylornithine transaminase, found in Escherichia coli O45:K1 (strain S88 / ExPEC).